The primary structure comprises 182 residues: Probable RNA 2'-phosphotransferase (182 aa).

This sequence belongs to the KptA/TPT1 family.

In terms of biological role, removes the 2'-phosphate from RNA via an intermediate in which the phosphate is ADP-ribosylated by NAD followed by a presumed transesterification to release the RNA and generate ADP-ribose 1''-2''-cyclic phosphate (APPR&gt;P). May function as an ADP-ribosylase. The chain is Probable RNA 2'-phosphotransferase from Pseudomonas paraeruginosa (strain DSM 24068 / PA7) (Pseudomonas aeruginosa (strain PA7)).